A 256-amino-acid chain; its full sequence is Homeobox-leucine zipper protein HOX28 (256 aa).

The tract at residues 56-86 (ACSPGSPVSSGSGKRGSGSGSGDEVDDAGCD) is disordered. The segment covering 58-67 (SPGSPVSSGS) has biased composition (low complexity). Positions 91–150 (GARKKLRLSKDQAAVLEECFKTHHTLTPKQKVALAKSLNLRPRQVEVWFQNRRARTKLKQ) form a DNA-binding region, homeobox. The interval 149 to 193 (KQTEVDCEHLKRWCDQLADDNRRLHKELAELRALKATPTPPAAAP) is leucine-zipper.

Belongs to the HD-ZIP homeobox family. Class II subfamily. In terms of tissue distribution, expressed in seedlings, roots, stems and panicles.

It is found in the nucleus. Functionally, probable transcription factor. This chain is Homeobox-leucine zipper protein HOX28 (HOX28), found in Oryza sativa subsp. indica (Rice).